A 447-amino-acid polypeptide reads, in one-letter code: Protein CLT1, chloroplastic (447 aa).

A chloroplast-targeting transit peptide spans 1-48; sequence MATTSSDRLIAGLTASIGSIESRYANPAQSVSLICRNQINGAPPIVLR. A run of 10 helical transmembrane segments spans residues 103–123, 135–155, 172–192, 200–220, 228–248, 256–276, 304–324, 351–371, 387–407, and 413–433; these read MEIV…RVLY, FFLA…ILYF, LPFL…MAAA, TTVL…IFLG, ILGC…GSGA, GILW…DTVM, IFQV…WGIP, GAPL…ISLL, TVSV…LGVA, and GFVA…WTPS.

Belongs to the CRT-like transporter family.

The protein localises to the plastid. The protein resides in the chloroplast membrane. Functionally, involved in thiol transport from the plastid to the cytosol. Transports probably both glutathione (GSH) and its precursor, gamma-glutamylcysteine (gamma-EC). Exhibits some functional redundancy with CLT3 in maintaining the root GSH pool. This chain is Protein CLT1, chloroplastic, found in Arabidopsis thaliana (Mouse-ear cress).